A 252-amino-acid polypeptide reads, in one-letter code: MRILLSNDDGYLAPGLAALYEALKPIADVTVMAPEQNCSGASNSLTLSRPLSVLRSANGFYYVNGTPTDSVHIALTGMLDHRPDLVVSGINNGQNMGEDTLYSGTVAAATEGIMFGVPAIAFSLVDKDWVHLEDAVRVSAEIVAHYLEQPLPGHPLLNVNIPNLPYDQLGDWQITRLGKRHPSQPVIRQTNPRGEPIYWIGPAGSARDASEGTDFHAVANGHVSITPLQLDLTHTQMLPAARDWARAGSGAS.

A divalent metal cation-binding residues include D8, D9, S39, and N91.

This sequence belongs to the SurE nucleotidase family. The cofactor is a divalent metal cation.

The protein resides in the cytoplasm. The enzyme catalyses a ribonucleoside 5'-phosphate + H2O = a ribonucleoside + phosphate. Nucleotidase that shows phosphatase activity on nucleoside 5'-monophosphates. The protein is 5'-nucleotidase SurE of Paraburkholderia xenovorans (strain LB400).